We begin with the raw amino-acid sequence, 448 residues long: Tryptophan dimethylallyltransferase 1 (448 aa).

Residues 80 to 81 (IL) and E89 each bind L-tryptophan. Substrate-binding residues include R100, K186, and Y188. Residues Y190 and R249 each contribute to the L-tryptophan site. Residues R262, K264, Y266, Q348, Y350, Y414, and Y418 each coordinate substrate.

It belongs to the tryptophan dimethylallyltransferase family. Homodimer.

It catalyses the reaction L-tryptophan + dimethylallyl diphosphate = 4-(3-methylbut-2-enyl)-L-tryptophan + diphosphate. The protein operates within alkaloid biosynthesis; ergot alkaloid biosynthesis. Tryptophan dimethylallyltransferase; part of the gene cluster that mediates the biosynthesis of fungal ergot alkaloid. DmaW catalyzes the first step of ergot alkaloid biosynthesis by condensing dimethylallyl diphosphate (DMAP) and tryptophan to form 4-dimethylallyl-L-tryptophan. The second step is catalyzed by the methyltransferase easF that methylates 4-dimethylallyl-L-tryptophan in the presence of S-adenosyl-L-methionine, resulting in the formation of 4-dimethylallyl-L-abrine. The catalase easC and the FAD-dependent oxidoreductase easE then transform 4-dimethylallyl-L-abrine to chanoclavine-I which is further oxidized by easD in the presence of NAD(+), resulting in the formation of chanoclavine-I aldehyde. Agroclavine dehydrogenase easG then mediates the conversion of chanoclavine-I aldehyde to agroclavine via a non-enzymatic adduct reaction: the substrate is an iminium intermediate that is formed spontaneously from chanoclavine-I aldehyde in the presence of glutathione. The presence of easA is not required to complete this reaction. Further conversion of agroclavine to paspalic acid is a two-step process involving oxidation of agroclavine to elymoclavine and of elymoclavine to paspalic acid, the second step being performed by the elymoclavine oxidase cloA. Paspalic acid is then further converted to D-lysergic acid. Ergopeptines are assembled from D-lysergic acid and three different amino acids by the D-lysergyl-peptide-synthetases composed each of a monomudular and a trimodular nonribosomal peptide synthetase subunit. LpsB and lpsC encode the monomodular subunits responsible for D-lysergic acid activation and incorporation into the ergopeptine backbone. LpsA1 and A2 subunits encode the trimodular nonribosomal peptide synthetase assembling the tripeptide portion of ergopeptines. LpsA1 is responsible for formation of the major ergopeptine, ergotamine, and lpsA2 for alpha-ergocryptine, the minor ergopeptine of the total alkaloid mixture elaborated by C.purpurea. D-lysergyl-tripeptides are assembled by the nonribosomal peptide synthetases and released as N-(D-lysergyl-aminoacyl)-lactams. Cyclolization of the D-lysergyl-tripeptides is performed by the Fe(2+)/2-ketoglutarate-dependent dioxygenase easH which introduces a hydroxyl group into N-(D-lysergyl-aminoacyl)-lactam at alpha-C of the aminoacyl residue followed by spontaneous condensation with the terminal lactam carbonyl group. In Claviceps purpurea (Ergot fungus), this protein is Tryptophan dimethylallyltransferase 1.